The primary structure comprises 198 residues: Elongation factor Ts (198 aa).

Residues Ser82–Val85 are involved in Mg(2+) ion dislocation from EF-Tu.

It belongs to the EF-Ts family.

The protein localises to the cytoplasm. Its function is as follows. Associates with the EF-Tu.GDP complex and induces the exchange of GDP to GTP. It remains bound to the aminoacyl-tRNA.EF-Tu.GTP complex up to the GTP hydrolysis stage on the ribosome. This Desulfosudis oleivorans (strain DSM 6200 / JCM 39069 / Hxd3) (Desulfococcus oleovorans) protein is Elongation factor Ts.